A 609-amino-acid polypeptide reads, in one-letter code: Threonine--tRNA ligase (609 aa).

Positions 1 to 145 (MRLLLIHSDY…TIVPGAGAAV (145 aa)) are editing domain. The tract at residues 194-485 (IHVDLMRSKE…TANQSVPQLP (292 aa)) is catalytic. Residues cysteine 286, histidine 338, and histidine 458 each contribute to the Zn(2+) site.

It belongs to the class-II aminoacyl-tRNA synthetase family. As to quaternary structure, homodimer. The cofactor is Zn(2+).

The protein localises to the cytoplasm. The enzyme catalyses tRNA(Thr) + L-threonine + ATP = L-threonyl-tRNA(Thr) + AMP + diphosphate + H(+). Functionally, catalyzes the attachment of threonine to tRNA(Thr) in a two-step reaction: L-threonine is first activated by ATP to form Thr-AMP and then transferred to the acceptor end of tRNA(Thr). Also edits incorrectly charged L-seryl-tRNA(Thr). This is Threonine--tRNA ligase from Methanosphaerula palustris (strain ATCC BAA-1556 / DSM 19958 / E1-9c).